The sequence spans 164 residues: 3-isopropylmalate dehydratase small subunit 1 (164 aa).

It belongs to the LeuD family. LeuD type 2 subfamily. In terms of assembly, heterodimer of LeuC and LeuD.

The catalysed reaction is (2R,3S)-3-isopropylmalate = (2S)-2-isopropylmalate. It functions in the pathway amino-acid biosynthesis; L-leucine biosynthesis; L-leucine from 3-methyl-2-oxobutanoate: step 2/4. Its function is as follows. Catalyzes the isomerization between 2-isopropylmalate and 3-isopropylmalate, via the formation of 2-isopropylmaleate. The polypeptide is 3-isopropylmalate dehydratase small subunit 1 (leuD1) (Pyrococcus abyssi (strain GE5 / Orsay)).